The sequence spans 101 residues: Urease subunit beta (101 aa).

It belongs to the urease beta subunit family. In terms of assembly, heterotrimer of UreA (gamma), UreB (beta) and UreC (alpha) subunits. Three heterotrimers associate to form the active enzyme.

Its subcellular location is the cytoplasm. It catalyses the reaction urea + 2 H2O + H(+) = hydrogencarbonate + 2 NH4(+). The protein operates within nitrogen metabolism; urea degradation; CO(2) and NH(3) from urea (urease route): step 1/1. The protein is Urease subunit beta of Rhizobium etli (strain CIAT 652).